Consider the following 305-residue polypeptide: GMP synthase [glutamine-hydrolyzing] subunit B (305 aa).

One can recognise a GMPS ATP-PPase domain in the interval 2–184; the sequence is VDANAFIDEA…LPLPEEISER (183 aa). 29–35 provides a ligand contact to ATP; it reads SGGVDSS.

As to quaternary structure, heterodimer composed of a glutamine amidotransferase subunit (A) and a GMP-binding subunit (B).

The enzyme catalyses XMP + L-glutamine + ATP + H2O = GMP + L-glutamate + AMP + diphosphate + 2 H(+). The protein operates within purine metabolism; GMP biosynthesis; GMP from XMP (L-Gln route): step 1/1. In terms of biological role, catalyzes the synthesis of GMP from XMP. This Methanocella arvoryzae (strain DSM 22066 / NBRC 105507 / MRE50) protein is GMP synthase [glutamine-hydrolyzing] subunit B.